Here is a 565-residue protein sequence, read N- to C-terminus: Cytokinin dehydrogenase 2 (565 aa).

A signal peptide spans 1 to 20 (MKQEQVRMAVLLMLNCFVKA). N-linked (GlcNAc...) asparagine glycosylation is present at Asn-64. The region spanning 74 to 255 (RLAAAAAVLY…TRARIPLAPA (182 aa)) is the FAD-binding PCMH-type domain. FAD contacts are provided by Ala-108, Gly-110, and Gly-112. The residue at position 113 (His-113) is a Pros-8alpha-FAD histidine. 7 residues coordinate FAD: Ser-114, Gln-118, Asp-179, Thr-184, Ser-190, Ile-194, and Ile-245. Asn-464 carries an N-linked (GlcNAc...) asparagine glycan. Residues Tyr-517, Ser-554, and Gln-557 each coordinate FAD.

The protein belongs to the oxygen-dependent FAD-linked oxidoreductase family. Monomer. The cofactor is FAD. Post-translationally, glycosylated. Mostly expressed in leaves, culms, inflorescence meristems, and flowers, especially in vascular tissues.

Its subcellular location is the secreted. It localises to the extracellular space. The enzyme catalyses N(6)-dimethylallyladenine + A + H2O = 3-methyl-2-butenal + adenine + AH2. In terms of biological role, catalyzes the oxidation of cytokinins, a family of N(6)-substituted adenine derivatives that are plant hormones, where the substituent is an isopentenyl group. Is a major QTL involved in grain yield. Modulates the number of reproductive organs by regulating the cytokinin accumulation in inflorescence meristems. Acts as negative regulator of panicle branching. In Oryza sativa subsp. japonica (Rice), this protein is Cytokinin dehydrogenase 2.